The chain runs to 468 residues: MNDFGIKNMDQVAPVANSFRGTLKRQPAFDTFDGSLFAVLPSLSEDQTLQEVPTGLDSVSHDSASCELPLLTPCSKAVMSQALKATFSGFQKEQRRLGIPKNPWLWSEQQVCQWLLWATNEFSLVNVNLHQFGMNGQMLCNLGKERFLELAPDFVGDILWEHLEQMIKENQEKTEDQYEENSHLNAVPHWINSNTLGFSMEQAPYGMQAPNYPKDNLLDSMCPPSATPAALGSELQMLPKSRLNTVNVNYCSISQDFPSSNVNLLNNNSGKPKDHDSPENGGDSFESSDSLLRSWNSQSSLLDVQRVPSFESFEEDCSQSLCLSKLTMSFKDYIQERSDPVEQGKPVIPAAVLAGFTGSGPIQLWQFLLELLSDKSCQSFISWTGDGWEFKLADPDEVARRWGKRKNKPKMNYEKLSRGLRYYYDKNIIHKTSGKRYVYRFVCDLQNLLGFTPEELHAILGVQPDTED.

In terms of domain architecture, PNT spans 85 to 170 (ATFSGFQKEQ…EHLEQMIKEN (86 aa)). A phosphoserine mark is found at serine 220 and serine 225. The disordered stretch occupies residues 262 to 290 (VNLLNNNSGKPKDHDSPENGGDSFESSDS). 3 positions are modified to phosphoserine: serine 294, serine 297, and serine 300. The segment at residues 362–442 (IQLWQFLLEL…SGKRYVYRFV (81 aa)) is a DNA-binding region (ETS).

It belongs to the ETS family. Phosphorylation by CDK10 at Ser-220 and Ser-225 creates a phosphodegron that targets ETS2 for proteasomal degradation.

Its subcellular location is the nucleus. In terms of biological role, transcription factor activating transcription. Binds specifically the GGA DNA motif in gene promoters and stimulates transcription of those genes. The sequence is that of Protein C-ets-2 (Ets2) from Mus musculus (Mouse).